A 145-amino-acid polypeptide reads, in one-letter code: Large ribosomal subunit protein uL11 (145 aa).

This sequence belongs to the universal ribosomal protein uL11 family. Part of the ribosomal stalk of the 50S ribosomal subunit. Interacts with L10 and the large rRNA to form the base of the stalk. L10 forms an elongated spine to which L12 dimers bind in a sequential fashion forming a multimeric L10(L12)X complex. Post-translationally, one or more lysine residues are methylated.

Its function is as follows. Forms part of the ribosomal stalk which helps the ribosome interact with GTP-bound translation factors. In Porphyromonas gingivalis (strain ATCC 33277 / DSM 20709 / CIP 103683 / JCM 12257 / NCTC 11834 / 2561), this protein is Large ribosomal subunit protein uL11.